Reading from the N-terminus, the 408-residue chain is Multidrug resistance protein MdtG (408 aa).

The next 11 helical transmembrane spans lie at 16–36, 58–78, 92–112, 115–135, 146–166, 173–193, 224–244, 256–276, 290–310, 319–339, and 378–398; these read LIVAWLGCFLTGAAFSLVMPF, IVFSITFLFSAIASPFWGGLA, LGMGIVMVLMGLAQNIWQFLI, ALLGLLGGFVPNANALIATQV, TLSTGGVSGALLGPMAGGLLA, PVFFITASVLILCFFVTLFCI, LFVTTLIIQVATGSIAPILTL, VAFISGMIASVPGVAALLSAP, ILITALIFSVLLLIPMSYVQT, FLLGAADGALLPAVQTLLVYN, and AVFLVTAGVVLFNAVYSWNSL.

The protein belongs to the major facilitator superfamily. DHA1 family. MdtG (TC 2.A.1.2.20) subfamily.

Its subcellular location is the cell inner membrane. Confers resistance to fosfomycin and deoxycholate. The sequence is that of Multidrug resistance protein MdtG from Escherichia coli O139:H28 (strain E24377A / ETEC).